The sequence spans 398 residues: Na(+)/H(+) antiporter NhaA 2 (398 aa).

The next 11 helical transmembrane spans lie at isoleucine 17 to leucine 37, leucine 59 to valine 79, serine 95 to phenylalanine 115, glycine 125 to glycine 145, valine 154 to phenylalanine 174, leucine 179 to leucine 199, leucine 213 to isoleucine 233, phenylalanine 262 to leucine 282, proline 288 to phenylalanine 308, alanine 331 to phenylalanine 351, and leucine 364 to valine 384.

It belongs to the NhaA Na(+)/H(+) (TC 2.A.33) antiporter family.

It localises to the cell inner membrane. The catalysed reaction is Na(+)(in) + 2 H(+)(out) = Na(+)(out) + 2 H(+)(in). In terms of biological role, na(+)/H(+) antiporter that extrudes sodium in exchange for external protons. This Shewanella denitrificans (strain OS217 / ATCC BAA-1090 / DSM 15013) protein is Na(+)/H(+) antiporter NhaA 2.